The following is a 152-amino-acid chain: Superoxide dismutase [Cu-Zn] (152 aa).

The Cu cation site is built by His45, His47, and His62. A disulfide bridge connects residues Cys56 and Cys145. Residues His62, His70, His79, and Asp82 each coordinate Zn(2+). A Cu cation-binding site is contributed by His119.

It belongs to the Cu-Zn superoxide dismutase family. In terms of assembly, homodimer. Cu cation serves as cofactor. Requires Zn(2+) as cofactor.

Its subcellular location is the cytoplasm. It carries out the reaction 2 superoxide + 2 H(+) = H2O2 + O2. In terms of biological role, destroys radicals which are normally produced within the cells and which are toxic to biological systems. In Zantedeschia aethiopica (White calla lily), this protein is Superoxide dismutase [Cu-Zn] (SODCC).